A 355-amino-acid chain; its full sequence is 3-isopropylmalate dehydrogenase (355 aa).

The substrate site is built by Arg-90, Arg-100, Arg-128, and Asp-222. Asp-222, Asp-246, and Asp-250 together coordinate Mg(2+). 280 to 292 (GSAPDIAGKGVAN) lines the NAD(+) pocket.

The protein belongs to the isocitrate and isopropylmalate dehydrogenases family. LeuB type 1 subfamily. As to quaternary structure, homodimer. It depends on Mg(2+) as a cofactor. Mn(2+) is required as a cofactor.

Its subcellular location is the cytoplasm. It carries out the reaction (2R,3S)-3-isopropylmalate + NAD(+) = 4-methyl-2-oxopentanoate + CO2 + NADH. Its pathway is amino-acid biosynthesis; L-leucine biosynthesis; L-leucine from 3-methyl-2-oxobutanoate: step 3/4. Its function is as follows. Catalyzes the oxidation of 3-carboxy-2-hydroxy-4-methylpentanoate (3-isopropylmalate) to 3-carboxy-4-methyl-2-oxopentanoate. The product decarboxylates to 4-methyl-2 oxopentanoate. This is 3-isopropylmalate dehydrogenase from Cupriavidus pinatubonensis (strain JMP 134 / LMG 1197) (Cupriavidus necator (strain JMP 134)).